The primary structure comprises 74 residues: UPF0291 protein lmo0496 (74 aa).

The protein belongs to the UPF0291 family.

It localises to the cytoplasm. In Listeria monocytogenes serovar 1/2a (strain ATCC BAA-679 / EGD-e), this protein is UPF0291 protein lmo0496.